The sequence spans 258 residues: UPF0328 protein ECU02_0090 (258 aa).

It belongs to the UPF0328 family.

This is UPF0328 protein ECU02_0090 from Encephalitozoon cuniculi (strain GB-M1) (Microsporidian parasite).